Reading from the N-terminus, the 198-residue chain is Pyridoxal 5'-phosphate synthase subunit PdxT (198 aa).

49–51 (GES) is an L-glutamine binding site. Catalysis depends on Cys-81, which acts as the Nucleophile. L-glutamine-binding positions include Arg-112 and 140–141 (IR). Catalysis depends on charge relay system residues His-176 and Glu-178.

The protein belongs to the glutaminase PdxT/SNO family. In the presence of PdxS, forms a dodecamer of heterodimers. Only shows activity in the heterodimer.

It carries out the reaction aldehydo-D-ribose 5-phosphate + D-glyceraldehyde 3-phosphate + L-glutamine = pyridoxal 5'-phosphate + L-glutamate + phosphate + 3 H2O + H(+). The catalysed reaction is L-glutamine + H2O = L-glutamate + NH4(+). It functions in the pathway cofactor biosynthesis; pyridoxal 5'-phosphate biosynthesis. Functionally, catalyzes the hydrolysis of glutamine to glutamate and ammonia as part of the biosynthesis of pyridoxal 5'-phosphate. The resulting ammonia molecule is channeled to the active site of PdxS. The sequence is that of Pyridoxal 5'-phosphate synthase subunit PdxT from Methanocella arvoryzae (strain DSM 22066 / NBRC 105507 / MRE50).